A 310-amino-acid polypeptide reads, in one-letter code: Transcription factor UNE12 (310 aa).

Disordered regions lie at residues 124–156 (HGQP…ATDP) and 229–253 (SSSV…WSND). Positions 152–201 (QATDPHSIAERLRRERIAERIRALQELVPTVNKTDRAAMIDEIVDYVKFL) constitute a bHLH domain.

Homodimer. Expressed constitutively in roots, leaves, stems, and flowers.

It is found in the nucleus. In terms of biological role, required for ovule fertilization. This Arabidopsis thaliana (Mouse-ear cress) protein is Transcription factor UNE12 (UNE12).